The sequence spans 361 residues: Adenosine kinase (361 aa).

The Nuclear localization signal motif lies at 7-15 (PKPKKLKVE). D34 contacts adenosine. S48 provides a ligand contact to Mg(2+). Y76 carries the phosphotyrosine modification. Residue N147 coordinates Mg(2+). Q305 is an adenosine binding site. D316 is a catalytic residue. D316 serves as the catalytic Proton acceptor.

The protein belongs to the carbohydrate kinase PfkB family. As to quaternary structure, monomer. It depends on Mg(2+) as a cofactor.

The protein resides in the nucleus. The catalysed reaction is adenosine + ATP = AMP + ADP + H(+). It functions in the pathway purine metabolism; AMP biosynthesis via salvage pathway; AMP from adenosine: step 1/1. Catalyzes the phosphorylation of the purine nucleoside adenosine at the 5' position in an ATP-dependent manner. Serves as a potential regulator of concentrations of extracellular adenosine and intracellular adenine nucleotides. In Rattus norvegicus (Rat), this protein is Adenosine kinase (Adk).